We begin with the raw amino-acid sequence, 1060 residues long: Carbamoyl phosphate synthase large chain (1060 aa).

The interval 1–400 (MPRDESINKV…SLNKAIRSLD (400 aa)) is carboxyphosphate synthetic domain. Residues Arg-127, Arg-167, Gly-173, Gly-174, Gln-206, Val-208, Glu-213, Gly-240, Ile-241, His-242, Gln-283, and Glu-297 each coordinate ATP. The region spanning 131-326 (DSFMKKLNEP…IAKIAAKIAV (196 aa)) is the ATP-grasp 1 domain. Gln-283, Glu-297, and Asn-299 together coordinate Mg(2+). Gln-283, Glu-297, and Asn-299 together coordinate Mn(2+). The oligomerization domain stretch occupies residues 401-539 (IGADGFTETP…YGCYDLEDEV (139 aa)). The carbamoyl phosphate synthetic domain stretch occupies residues 540–926 (EVSDRRKVLI…YKSQLSASMD (387 aa)). The region spanning 664–858 (TEVLNKLGIP…LAKMAARLMM (195 aa)) is the ATP-grasp 2 domain. Arg-700, Lys-739, Leu-741, Glu-746, Gly-771, Val-772, His-773, Ser-774, Gln-814, and Glu-829 together coordinate ATP. The Mg(2+) site is built by Gln-814, Glu-829, and Asn-831. Residues Gln-814, Glu-829, and Asn-831 each coordinate Mn(2+). The region spanning 925-1060 (MDLLNEGKVF…VKSLDEYHGM (136 aa)) is the MGS-like domain. Residues 927-1060 (LLNEGKVFIS…VKSLDEYHGM (134 aa)) form an allosteric domain region.

This sequence belongs to the CarB family. Composed of two chains; the small (or glutamine) chain promotes the hydrolysis of glutamine to ammonia, which is used by the large (or ammonia) chain to synthesize carbamoyl phosphate. Tetramer of heterodimers (alpha,beta)4. The cofactor is Mg(2+). It depends on Mn(2+) as a cofactor.

It catalyses the reaction hydrogencarbonate + L-glutamine + 2 ATP + H2O = carbamoyl phosphate + L-glutamate + 2 ADP + phosphate + 2 H(+). The enzyme catalyses hydrogencarbonate + NH4(+) + 2 ATP = carbamoyl phosphate + 2 ADP + phosphate + 2 H(+). The protein operates within amino-acid biosynthesis; L-arginine biosynthesis; carbamoyl phosphate from bicarbonate: step 1/1. It functions in the pathway pyrimidine metabolism; UMP biosynthesis via de novo pathway; (S)-dihydroorotate from bicarbonate: step 1/3. In terms of biological role, large subunit of the glutamine-dependent carbamoyl phosphate synthetase (CPSase). CPSase catalyzes the formation of carbamoyl phosphate from the ammonia moiety of glutamine, carbonate, and phosphate donated by ATP, constituting the first step of 2 biosynthetic pathways, one leading to arginine and/or urea and the other to pyrimidine nucleotides. The large subunit (synthetase) binds the substrates ammonia (free or transferred from glutamine from the small subunit), hydrogencarbonate and ATP and carries out an ATP-coupled ligase reaction, activating hydrogencarbonate by forming carboxy phosphate which reacts with ammonia to form carbamoyl phosphate. This chain is Carbamoyl phosphate synthase large chain, found in Methanothermobacter thermautotrophicus (strain ATCC 29096 / DSM 1053 / JCM 10044 / NBRC 100330 / Delta H) (Methanobacterium thermoautotrophicum).